The following is a 214-amino-acid chain: Cell division protein B1 (214 aa).

In terms of biological role, part of a cell division machinery. The polypeptide is Cell division protein B1 (Sulfolobus acidocaldarius (strain ATCC 33909 / DSM 639 / JCM 8929 / NBRC 15157 / NCIMB 11770)).